A 451-amino-acid chain; its full sequence is Phosphoglucosamine mutase (451 aa).

Ser101 serves as the catalytic Phosphoserine intermediate. Ser101, Asp240, Asp242, and Asp244 together coordinate Mg(2+). Position 101 is a phosphoserine (Ser101).

Belongs to the phosphohexose mutase family. Requires Mg(2+) as cofactor. Activated by phosphorylation.

The enzyme catalyses alpha-D-glucosamine 1-phosphate = D-glucosamine 6-phosphate. Functionally, catalyzes the conversion of glucosamine-6-phosphate to glucosamine-1-phosphate. This Streptococcus pyogenes serotype M12 (strain MGAS2096) protein is Phosphoglucosamine mutase.